Consider the following 559-residue polypeptide: Protochlorophyllide-dependent translocon component 52, chloroplastic (559 aa).

Residues 1-55 constitute a chloroplast transit peptide; that stretch reads MEAALAACALPSLRILNTKPRFRCSFSNPSLPISPNSLITRKSSRFTTAVSSPPS. The disordered stretch occupies residues 44–70; it reads SRFTTAVSSPPSSSAATSTNSPPEPEA. Residues 47–64 show a composition bias toward low complexity; that stretch reads TTAVSSPPSSSAATSTNS. A Rieske domain is found at 85-195; the sequence is WYPVMPICDL…STVQHEIIWF (111 aa). [2Fe-2S] cluster is bound by residues cysteine 127, histidine 129, cysteine 147, and histidine 150. Residues histidine 248 and histidine 253 each coordinate Fe cation. The Redox-active motif signature appears at 483–486; that stretch reads CSSC. 2 consecutive transmembrane segments (helical) span residues 493–513 and 525–545; these read LNALEVILQIASVAMIGVMAV and IAVLVAAVLSFAASKWLSHFI.

[2Fe-2S] cluster is required as a cofactor.

It localises to the plastid. The protein localises to the chloroplast inner membrane. It carries out the reaction protochlorophyllide a + 4 reduced [2Fe-2S]-[ferredoxin] + 2 O2 + 5 H(+) = protochlorophyllide b + 4 oxidized [2Fe-2S]-[ferredoxin] + 3 H2O. Its activity is regulated as follows. Down-regulated by light. Its function is as follows. Part of a translocon most abundantly expressed in etiolated plants and involved in the protochlorophyllide-dependent import of the precursor NADPH:protochlorophyllide oxidoreductase A (pPORA). The sequence is that of Protochlorophyllide-dependent translocon component 52, chloroplastic from Arabidopsis thaliana (Mouse-ear cress).